The sequence spans 454 residues: Phenylalanine--tRNA ligase, mitochondrial (454 aa).

Substrate contacts are provided by residues 141–144 (SAHQ), Arg-163, 170–172 (VHY), 177–179 (QME), Glu-266, and Phe-291. A disordered region spans residues 327–347 (KSISTSSSSSSSSSSSSSSTL). A compositionally biased stretch (low complexity) spans 328-347 (SISTSSSSSSSSSSSSSSTL). In terms of domain architecture, FDX-ACB spans 361–454 (SKYPSCFKDV…LENHLSVKLR (94 aa)).

It belongs to the class-II aminoacyl-tRNA synthetase family. As to quaternary structure, monomer.

Its subcellular location is the mitochondrion matrix. It catalyses the reaction tRNA(Phe) + L-phenylalanine + ATP = L-phenylalanyl-tRNA(Phe) + AMP + diphosphate + H(+). In terms of biological role, is responsible for the charging of tRNA(Phe) with phenylalanine in mitochondrial translation. This Dictyostelium discoideum (Social amoeba) protein is Phenylalanine--tRNA ligase, mitochondrial (mpheS).